A 954-amino-acid polypeptide reads, in one-letter code: Isoleucine--tRNA ligase (954 aa).

The 'HIGH' region motif lies at 60 to 70 (PYANGALHMGH). Glutamate 564 is an L-isoleucyl-5'-AMP binding site. The 'KMSKS' region signature appears at 605-609 (KMSKS). Position 608 (lysine 608) interacts with ATP. Positions 923, 926, 943, and 946 each coordinate Zn(2+).

It belongs to the class-I aminoacyl-tRNA synthetase family. IleS type 1 subfamily. As to quaternary structure, monomer. Zn(2+) serves as cofactor.

The protein resides in the cytoplasm. It catalyses the reaction tRNA(Ile) + L-isoleucine + ATP = L-isoleucyl-tRNA(Ile) + AMP + diphosphate. Catalyzes the attachment of isoleucine to tRNA(Ile). As IleRS can inadvertently accommodate and process structurally similar amino acids such as valine, to avoid such errors it has two additional distinct tRNA(Ile)-dependent editing activities. One activity is designated as 'pretransfer' editing and involves the hydrolysis of activated Val-AMP. The other activity is designated 'posttransfer' editing and involves deacylation of mischarged Val-tRNA(Ile). This Synechococcus sp. (strain ATCC 27144 / PCC 6301 / SAUG 1402/1) (Anacystis nidulans) protein is Isoleucine--tRNA ligase.